The primary structure comprises 382 residues: ATP phosphoribosyltransferase regulatory subunit (382 aa).

Belongs to the class-II aminoacyl-tRNA synthetase family. HisZ subfamily. As to quaternary structure, heteromultimer composed of HisG and HisZ subunits.

It localises to the cytoplasm. The protein operates within amino-acid biosynthesis; L-histidine biosynthesis; L-histidine from 5-phospho-alpha-D-ribose 1-diphosphate: step 1/9. Its function is as follows. Required for the first step of histidine biosynthesis. May allow the feedback regulation of ATP phosphoribosyltransferase activity by histidine. The sequence is that of ATP phosphoribosyltransferase regulatory subunit from Burkholderia multivorans (strain ATCC 17616 / 249).